The following is an 88-amino-acid chain: Transmembrane protein 069R (88 aa).

The next 2 helical transmembrane spans lie at 30-50 (ALWP…VFTA) and 67-87 (VGVF…GDSF).

The protein localises to the host membrane. The sequence is that of Transmembrane protein 069R from Frog virus 3 (isolate Goorha) (FV-3).